Reading from the N-terminus, the 362-residue chain is Bifunctional chorismate mutase/prephenate dehydratase (362 aa).

The region spanning 1–92 (MEELKELRKE…ACLSLEKKIK (92 aa)) is the Chorismate mutase domain. Arginine 8, arginine 25, lysine 36, and glutamate 49 together coordinate substrate. The Prephenate dehydratase domain occupies 93–267 (VAYLGPKATF…NFTRFLVIAK (175 aa)). An ACT domain is found at 279 to 356 (SILFGVKDEP…QFLKVLGSYP (78 aa)).

The protein resides in the cytoplasm. It catalyses the reaction chorismate = prephenate. It carries out the reaction prephenate + H(+) = 3-phenylpyruvate + CO2 + H2O. It functions in the pathway amino-acid biosynthesis; L-phenylalanine biosynthesis; phenylpyruvate from prephenate: step 1/1. It participates in metabolic intermediate biosynthesis; prephenate biosynthesis; prephenate from chorismate: step 1/1. In terms of biological role, catalyzes the Claisen rearrangement of chorismate to prephenate and the decarboxylation/dehydration of prephenate to phenylpyruvate. The chain is Bifunctional chorismate mutase/prephenate dehydratase (pheA) from Aquifex aeolicus (strain VF5).